A 512-amino-acid polypeptide reads, in one-letter code: ETS translocation variant 3 (512 aa).

Residues 35–116 (IQLWHFILEL…KGKRFTYKFN (82 aa)) constitute a DNA-binding region (ETS). The disordered stretch occupies residues 136-222 (VPQSAPPVPT…NAIGGGGIGH (87 aa)). Phosphoserine occurs at positions 139, 159, and 315. Polar residues predominate over residues 158–184 (HSPTNDVQPGRFSASSLTASGQESSNG). Residues 336 to 512 (PEESTQFSIK…QGLATAAADA (177 aa)) form a disordered region. Residues 380–406 (IKVEPASEKDPESLRQSAREKEEHTQE) show a composition bias toward basic and acidic residues. Lys381 is covalently cross-linked (Glycyl lysine isopeptide (Lys-Gly) (interchain with G-Cter in SUMO2)). At Lys388 the chain carries N6-acetyllysine; alternate. Lys388 participates in a covalent cross-link: Glycyl lysine isopeptide (Lys-Gly) (interchain with G-Cter in SUMO2); alternate. Positions 443–452 (EPLEVTEDIE) are enriched in acidic residues. Composition is skewed to basic and acidic residues over residues 453–468 (DRPG…KEDA) and 479–491 (RWND…ELSK).

This sequence belongs to the ETS family.

The protein localises to the nucleus. Its function is as follows. Transcriptional repressor that contribute to growth arrest during terminal macrophage differentiation by repressing target genes involved in Ras-dependent proliferation. Represses MMP1 promoter activity. This Pan paniscus (Pygmy chimpanzee) protein is ETS translocation variant 3 (ETV3).